The following is a 500-amino-acid chain: L-arabinose isomerase (500 aa).

Positions 306, 333, 349, and 448 each coordinate Mn(2+).

Belongs to the arabinose isomerase family. Mn(2+) is required as a cofactor.

It catalyses the reaction beta-L-arabinopyranose = L-ribulose. It participates in carbohydrate degradation; L-arabinose degradation via L-ribulose; D-xylulose 5-phosphate from L-arabinose (bacterial route): step 1/3. Its function is as follows. Catalyzes the conversion of L-arabinose to L-ribulose. The sequence is that of L-arabinose isomerase from Shewanella sp. (strain ANA-3).